The sequence spans 256 residues: tRNA-cytidine(32) 2-sulfurtransferase (256 aa).

Positions 35–40 (SGGKDS) match the PP-loop motif motif. The [4Fe-4S] cluster site is built by Cys110, Cys113, and Cys201.

It belongs to the TtcA family. Homodimer. Mg(2+) is required as a cofactor. [4Fe-4S] cluster serves as cofactor.

The protein resides in the cytoplasm. The catalysed reaction is cytidine(32) in tRNA + S-sulfanyl-L-cysteinyl-[cysteine desulfurase] + AH2 + ATP = 2-thiocytidine(32) in tRNA + L-cysteinyl-[cysteine desulfurase] + A + AMP + diphosphate + H(+). Its pathway is tRNA modification. Its function is as follows. Catalyzes the ATP-dependent 2-thiolation of cytidine in position 32 of tRNA, to form 2-thiocytidine (s(2)C32). The sulfur atoms are provided by the cysteine/cysteine desulfurase (IscS) system. The chain is tRNA-cytidine(32) 2-sulfurtransferase from Coxiella burnetii (strain RSA 331 / Henzerling II).